A 52-amino-acid chain; its full sequence is Superoxide dismutase [Cu-Zn] 2 (52 aa).

A Cu cation-binding site is contributed by His-44.

It belongs to the Cu-Zn superoxide dismutase family. Homodimer. It depends on Cu cation as a cofactor. Requires Zn(2+) as cofactor.

It is found in the cytoplasm. The enzyme catalyses 2 superoxide + 2 H(+) = H2O2 + O2. Destroys radicals which are normally produced within the cells and which are toxic to biological systems. This is Superoxide dismutase [Cu-Zn] 2 from Debaryomyces hansenii (Yeast).